The following is a 267-amino-acid chain: GTP cyclohydrolase FolE2 (267 aa).

The protein belongs to the GTP cyclohydrolase IV family.

It catalyses the reaction GTP + H2O = 7,8-dihydroneopterin 3'-triphosphate + formate + H(+). The protein operates within cofactor biosynthesis; 7,8-dihydroneopterin triphosphate biosynthesis; 7,8-dihydroneopterin triphosphate from GTP: step 1/1. Functionally, converts GTP to 7,8-dihydroneopterin triphosphate. This Nitrosomonas eutropha (strain DSM 101675 / C91 / Nm57) protein is GTP cyclohydrolase FolE2.